Consider the following 513-residue polypeptide: Noroxomaritidine synthase 2 (513 aa).

A helical transmembrane segment spans residues 14 to 34 (HYPEILIAIACFLIFSLLLSA). Cys-458 serves as a coordination point for heme.

The protein belongs to the cytochrome P450 family. Heme serves as cofactor. In terms of tissue distribution, mostly expressed in stems, and, to a lower extent, in bulbs, roots, leaves and flowers.

The protein localises to the membrane. It carries out the reaction 4'-O-methylnorbelladine + reduced [NADPH--hemoprotein reductase] + O2 = (10bR,4aS)-noroxomaritidine + oxidized [NADPH--hemoprotein reductase] + 2 H2O + H(+). The catalysed reaction is 4'-O-methylnorbelladine + reduced [NADPH--hemoprotein reductase] + O2 = (10bS,4aR)-noroxomaritidine + oxidized [NADPH--hemoprotein reductase] + 2 H2O + H(+). The protein operates within alkaloid biosynthesis. Its function is as follows. Cytochrome P450 that catalyzes an intramolecular para-para' C-C phenol coupling of 4'-O-methylnorbelladine in alkaloids biosynthesis, including haemanthamine- and crinamine-type alkaloids, promising anticancer agents. Catalyzes the formation of (10bR,4aS)-noroxomaritidine and (10bS,4aR)-noroxomaritidine from 4'-O-methylnorbelladine. The polypeptide is Noroxomaritidine synthase 2 (Narcissus pseudonarcissus (Daffodil)).